The following is a 143-amino-acid chain: Anti-sigma F factor (143 aa).

Belongs to the anti-sigma-factor family.

It catalyses the reaction L-seryl-[protein] + ATP = O-phospho-L-seryl-[protein] + ADP + H(+). The catalysed reaction is L-threonyl-[protein] + ATP = O-phospho-L-threonyl-[protein] + ADP + H(+). Binds to sigma F and blocks its ability to form an RNA polymerase holoenzyme (E-sigma F). Phosphorylates SpoIIAA on a serine residue. This phosphorylation may enable SpoIIAA to act as an anti-anti-sigma factor that counteracts SpoIIAB and thus releases sigma F from inhibition. The polypeptide is Anti-sigma F factor (Caldanaerobacter subterraneus subsp. tengcongensis (strain DSM 15242 / JCM 11007 / NBRC 100824 / MB4) (Thermoanaerobacter tengcongensis)).